We begin with the raw amino-acid sequence, 377 residues long: Putative FBD-associated F-box protein At5g44940 (377 aa).

The F-box domain maps to 4-50; sequence FDYISEFPDCLLTQILLNLPTKDSVKTSVLSKRWRNLWLNVPGLRLR. The FBD domain maps to 297–346; it reads IDFHKVPQCLISTLEYVQIEELILKEKSGIKLVDYFLENSAVLKKLTLSF.

This is Putative FBD-associated F-box protein At5g44940 from Arabidopsis thaliana (Mouse-ear cress).